The following is a 317-amino-acid chain: Ribosomal RNA small subunit methyltransferase A (317 aa).

The S-adenosyl-L-methionine site is built by Asn-37, Val-39, Gly-64, Glu-85, Asp-115, and Asn-134. Residues Gly-293–Ser-317 form a disordered region.

This sequence belongs to the class I-like SAM-binding methyltransferase superfamily. rRNA adenine N(6)-methyltransferase family. RsmA subfamily.

The protein localises to the cytoplasm. It catalyses the reaction adenosine(1518)/adenosine(1519) in 16S rRNA + 4 S-adenosyl-L-methionine = N(6)-dimethyladenosine(1518)/N(6)-dimethyladenosine(1519) in 16S rRNA + 4 S-adenosyl-L-homocysteine + 4 H(+). Its function is as follows. Specifically dimethylates two adjacent adenosines (A1518 and A1519) in the loop of a conserved hairpin near the 3'-end of 16S rRNA in the 30S particle. May play a critical role in biogenesis of 30S subunits. The protein is Ribosomal RNA small subunit methyltransferase A of Mycobacterium bovis (strain BCG / Tokyo 172 / ATCC 35737 / TMC 1019).